The primary structure comprises 191 residues: Protein Ves (191 aa).

This sequence belongs to the Ves family.

The chain is Protein Ves from Escherichia coli (strain SMS-3-5 / SECEC).